A 292-amino-acid polypeptide reads, in one-letter code: Acetylglutamate kinase (292 aa).

Residues 64–65, Arg-86, and Asn-190 contribute to the substrate site; that span reads GG.

Belongs to the acetylglutamate kinase family. ArgB subfamily.

The protein resides in the cytoplasm. The enzyme catalyses N-acetyl-L-glutamate + ATP = N-acetyl-L-glutamyl 5-phosphate + ADP. It functions in the pathway amino-acid biosynthesis; L-arginine biosynthesis; N(2)-acetyl-L-ornithine from L-glutamate: step 2/4. Functionally, catalyzes the ATP-dependent phosphorylation of N-acetyl-L-glutamate. The polypeptide is Acetylglutamate kinase (Geobacter sulfurreducens (strain ATCC 51573 / DSM 12127 / PCA)).